A 302-amino-acid chain; its full sequence is Sulfate adenylyltransferase subunit 2 (302 aa).

It belongs to the PAPS reductase family. CysD subfamily. As to quaternary structure, heterodimer composed of CysD, the smaller subunit, and CysN.

The enzyme catalyses sulfate + ATP + H(+) = adenosine 5'-phosphosulfate + diphosphate. It functions in the pathway sulfur metabolism; hydrogen sulfide biosynthesis; sulfite from sulfate: step 1/3. Functionally, with CysN forms the ATP sulfurylase (ATPS) that catalyzes the adenylation of sulfate producing adenosine 5'-phosphosulfate (APS) and diphosphate, the first enzymatic step in sulfur assimilation pathway. APS synthesis involves the formation of a high-energy phosphoric-sulfuric acid anhydride bond driven by GTP hydrolysis by CysN coupled to ATP hydrolysis by CysD. The polypeptide is Sulfate adenylyltransferase subunit 2 (Psychromonas ingrahamii (strain DSM 17664 / CCUG 51855 / 37)).